The following is a 1066-amino-acid chain: FHIP family protein GI14169 (1066 aa).

Polar residues predominate over residues 1–11 (MSWLRTSPLRQ). The disordered stretch occupies residues 1–35 (MSWLRTSPLRQSLTRSGSSSGNGSSGTATTMRQRP). Residues 12–30 (SLTRSGSSSGNGSSGTATT) show a composition bias toward low complexity. Phosphoserine is present on Ser500. The segment at 651–682 (GIDVTTTTTASASDTDLEHNNNSSSISSGRRD) is disordered. Residues 655 to 678 (TTTTTASASDTDLEHNNNSSSISS) show a composition bias toward low complexity. A Phosphoserine modification is found at Ser820. 2 disordered regions span residues 821-913 (PLHQ…GNSA) and 935-1007 (SGGE…TGNF). The span at 822 to 855 (LHQQLQHQQQHQQLAQTNSHTQQQQQQQQQQAQQ) shows a compositional bias: low complexity. Positions 856–874 (RSTYATLSAATPVQASPTS) are enriched in polar residues. Residues 890–913 (SRSITSMFSRRSTSSTPASNGNSA) show a composition bias toward low complexity. Positions 947-971 (QDSTRGNTCETSLSTAPRQEPQTNV) are enriched in polar residues. The span at 972 to 997 (GSSSNSSIGSSTQTLSGTHSSSTLHG) shows a compositional bias: low complexity.

It belongs to the FHIP family.

The sequence is that of FHIP family protein GI14169 from Drosophila mojavensis (Fruit fly).